Consider the following 524-residue polypeptide: Probable serine/threonine-protein kinase WNK10 (524 aa).

Residues 16-273 enclose the Protein kinase domain; it reads IRYNDVLGRG…ALELLKDQLL (258 aa). Residues 96–99 and Lys-146 contribute to the ATP site; that span reads TELF. The active-site Proton acceptor is the Asp-163. Ser-477 is modified (phosphoserine). Residues 480–523 are a coiled coil; it reads SNKQSEDLKTELNVIESQYNQSCQRLLRMKEEAIEKAKRKWMKL.

It belongs to the protein kinase superfamily. Ser/Thr protein kinase family. WNK subfamily.

The enzyme catalyses L-seryl-[protein] + ATP = O-phospho-L-seryl-[protein] + ADP + H(+). It catalyses the reaction L-threonyl-[protein] + ATP = O-phospho-L-threonyl-[protein] + ADP + H(+). In terms of biological role, may regulate flowering time by modulating the photoperiod pathway. In Arabidopsis thaliana (Mouse-ear cress), this protein is Probable serine/threonine-protein kinase WNK10 (WNK10).